The following is a 428-amino-acid chain: Enolase (428 aa).

Glutamine 163 provides a ligand contact to (2R)-2-phosphoglycerate. The active-site Proton donor is the glutamate 205. Aspartate 242, glutamate 285, and aspartate 312 together coordinate Mg(2+). 4 residues coordinate (2R)-2-phosphoglycerate: lysine 337, arginine 366, serine 367, and lysine 388. The active-site Proton acceptor is the lysine 337.

This sequence belongs to the enolase family. Mg(2+) is required as a cofactor.

It is found in the cytoplasm. The protein localises to the secreted. The protein resides in the cell surface. It catalyses the reaction (2R)-2-phosphoglycerate = phosphoenolpyruvate + H2O. It participates in carbohydrate degradation; glycolysis; pyruvate from D-glyceraldehyde 3-phosphate: step 4/5. Its function is as follows. Catalyzes the reversible conversion of 2-phosphoglycerate (2-PG) into phosphoenolpyruvate (PEP). It is essential for the degradation of carbohydrates via glycolysis. This is Enolase from Persephonella marina (strain DSM 14350 / EX-H1).